The following is a 215-amino-acid chain: Pyrrolidone-carboxylate peptidase (215 aa).

Catalysis depends on residues E80, C143, and H167.

Belongs to the peptidase C15 family. Homotetramer.

It is found in the cytoplasm. The catalysed reaction is Release of an N-terminal pyroglutamyl group from a polypeptide, the second amino acid generally not being Pro.. Functionally, removes 5-oxoproline from various penultimate amino acid residues except L-proline. This Pectobacterium atrosepticum (strain SCRI 1043 / ATCC BAA-672) (Erwinia carotovora subsp. atroseptica) protein is Pyrrolidone-carboxylate peptidase.